The chain runs to 348 residues: L-threonine 3-dehydrogenase (348 aa).

Position 42 (cysteine 42) interacts with Zn(2+). Catalysis depends on charge relay system residues threonine 44 and histidine 47. Residues histidine 67, glutamate 68, cysteine 97, cysteine 100, cysteine 103, and cysteine 111 each coordinate Zn(2+). NAD(+) is bound by residues leucine 179, glutamate 199, arginine 204, 266–268 (LGL), and 291–292 (IT).

The protein belongs to the zinc-containing alcohol dehydrogenase family. Homotetramer. The cofactor is Zn(2+).

It localises to the cytoplasm. The enzyme catalyses L-threonine + NAD(+) = (2S)-2-amino-3-oxobutanoate + NADH + H(+). Its pathway is amino-acid degradation; L-threonine degradation via oxydo-reductase pathway; glycine from L-threonine: step 1/2. Functionally, catalyzes the NAD(+)-dependent oxidation of L-threonine to 2-amino-3-ketobutyrate. To a lesser extent, also catalyzes the oxidation of L-serine, D-threonine, butan-2,3-diol, butan-1,2-diol, and propan-1,2-diol and cannot oxidize other L-amino acids. Cannot utilize NADP(H) instead of NAD(H). This Pyrococcus furiosus (strain ATCC 43587 / DSM 3638 / JCM 8422 / Vc1) protein is L-threonine 3-dehydrogenase.